The sequence spans 77 residues: VpAmp2.0 (77 aa).

Residues 1–23 (MQLRKALLVIFVAYLLVTDEAEA) form the signal peptide. The propeptide occupies 49–77 (RKREIEDLFDPYQKDLDLQRLDRFFSQFQ).

This sequence belongs to the non-disulfide-bridged peptide (NDBP) superfamily. Medium-length antimicrobial peptide (group 3) family. Expressed by the venom gland.

It localises to the secreted. It is found in the target cell membrane. Antimicrobial peptide with potent activity against Gram-positive bacteria S.aureus (MIC=10 uM) and S.agalactiaea (MIC=15 uM), and Gram-negative bacteria E.coli (MIC=24 uM) and P.aeruginosa (MIC=15 uM), as well as against yeasts Candida albicans (MIC=3.1 uM) and C.glabrata (MIC=25 uM). Also elicits low hemolysis on human erythrocytes (HC(50)=167 uM). This is VpAmp2.0 from Mesomexovis punctatus (Scorpion).